The primary structure comprises 270 residues: ParA family protein MPN_688 (270 aa).

Belongs to the ParA family.

This chain is ParA family protein MPN_688, found in Mycoplasma pneumoniae (strain ATCC 29342 / M129 / Subtype 1) (Mycoplasmoides pneumoniae).